The chain runs to 327 residues: UPF0065 protein in gbd 5'region (327 aa).

A signal peptide (tat-type signal) is located at residues 1-30 (MQRRHFIARAGIAAATAALGLAAMPAQAQA).

It belongs to the UPF0065 (bug) family. In terms of processing, predicted to be exported by the Tat system. The position of the signal peptide cleavage has not been experimentally proven.

It is found in the periplasm. This chain is UPF0065 protein in gbd 5'region, found in Cupriavidus necator (Alcaligenes eutrophus).